The chain runs to 668 residues: Transketolase 1 (668 aa).

Substrate is bound at residue histidine 26. Residues histidine 66 and glycine 114–leucine 116 contribute to the thiamine diphosphate site. Aspartate 155 lines the Mg(2+) pocket. Glycine 156 and asparagine 185 together coordinate thiamine diphosphate. Mg(2+)-binding residues include asparagine 185 and isoleucine 187. The substrate site is built by histidine 261, arginine 358, and serine 385. Histidine 261 is a binding site for thiamine diphosphate. Residue glutamate 413 is the Proton donor of the active site. Position 439 (phenylalanine 439) interacts with thiamine diphosphate. Substrate-binding residues include histidine 463, aspartate 471, and arginine 522.

It belongs to the transketolase family. In terms of assembly, homodimer. Mg(2+) is required as a cofactor. Ca(2+) serves as cofactor. The cofactor is Mn(2+). Requires Co(2+) as cofactor. It depends on thiamine diphosphate as a cofactor.

The catalysed reaction is D-sedoheptulose 7-phosphate + D-glyceraldehyde 3-phosphate = aldehydo-D-ribose 5-phosphate + D-xylulose 5-phosphate. Its function is as follows. Catalyzes the transfer of a two-carbon ketol group from a ketose donor to an aldose acceptor, via a covalent intermediate with the cofactor thiamine pyrophosphate. The chain is Transketolase 1 (tktA) from Pasteurella multocida (strain Pm70).